An 845-amino-acid polypeptide reads, in one-letter code: MGSWALLWPPLLFTGLLVRPPGTMAQAQYCSVNKDIFEVEENTNVTEPLVDIHVPEGQEVTLGALSTPFAFRIQGNQLFLNVTPDYEEKSLLEAQLLCQSGGTLVTQLRVFVSVLDVNDNAPEFPFKTKEIRVEEDTKVNSTVIPETQLQAEDRDKDDILFYTLQEMTAGASDYFSLVSVNRPALRLDRPLDFYERPNMTFWLLVRDTPGENVEPSHTATATLVLNVVPADLRPPWFLPCTFSDGYVCIQAQYHGAVPTGHILPSPLVLRPGPIYAEDGDRGINQPIIYSIFRGNVNGTFIIHPDSGNLTVARSVPSPMTFLLLVKGQQADLARYSVTQVTVEAVAAAGSPPRFPQRLYRGTVARGAGAGVVVKDAAAPSQPLRIQAQDPEFSDLNSAITYRITNHSHFRMEGEVVLTTTTLAQAGAFYAEVEAHNTVTSGTATTVIEIQVSEQEPPSTDVPPSPEAGGTTGPWTSTTSEVPRPPEPSQGPSTTSSGGGTGPHPPSGTTLRPPTSSTPGGPPGAENSTSHQPATPGGDTAQTPKPGTSQPMPPGVGTSTSHQPATPSGGTAQTPEPGTSQPMPPSMGTSTSHQPATPGGGTAQTPEAGTSQPMPPGMGTSTSHQPTTPGGGTAQTPEPGTSQPMPLSKSTPSSGGGPSEDKRFSVVDMAALGGVLGALLLLALLGLAVLVHKHYGPRLKCCCGKAPEPQPQGFDNQAFLPDHKANWAPVPSPTHDPKPAEAPMPAEPAPPGPASPGGAPEPPAAARAGGSPTAVRSILTKERRPEGGYKAVWFGEDIGTEADVVVLNAPTLDVDGASDSGSGDEGEGAGRGGGPYDAPGGDDSYI.

The N-terminal stretch at 1–25 (MGSWALLWPPLLFTGLLVRPPGTMA) is a signal peptide. Topologically, residues 26–669 (QAQYCSVNKD…DKRFSVVDMA (644 aa)) are extracellular. Residues N44, N81, N140, N198, N297, N308, and N405 are each glycosylated (N-linked (GlcNAc...) asparagine). Cadherin domains are found at residues 71-124 (FRIQ…APEF), 125-237 (PFKT…PPWF), 249-354 (IQAQ…PPRF), and 355-459 (PQRL…PPST). The disordered stretch occupies residues 452–661 (SEQEPPSTDV…SSGGGPSEDK (210 aa)). Positions 506–518 (SGTTLRPPTSSTP) are enriched in low complexity. N526 carries an N-linked (GlcNAc...) asparagine glycan. Polar residues-rich tracts occupy residues 539-549 (TAQTPKPGTSQ), 556-594 (GTST…SHQP), and 602-611 (AQTPEAGTSQ). A run of 3 repeats spans residues 540 to 570 (AQTP…SGGT), 571 to 601 (AQTP…GGGT), and 602 to 631 (AQTP…PGGG). Positions 540–645 (AQTPKPGTSQ…PEPGTSQPMP (106 aa)) are 4 X 31 AA approximate tandem repeats. The 4; truncated repeat unit spans residues 632-645 (TAQTPEPGTSQPMP). The segment covering 633–652 (AQTPEPGTSQPMPLSKSTPS) has biased composition (low complexity). Residues 670–690 (ALGGVLGALLLLALLGLAVLV) traverse the membrane as a helical segment. Residues 691-845 (HKHYGPRLKC…DAPGGDDSYI (155 aa)) lie on the Cytoplasmic side of the membrane. A mediates interaction with USH1C and MYO7B and is required for proper localization to microvilli tips and function in microvilli organization region spans residues 691-845 (HKHYGPRLKC…DAPGGDDSYI (155 aa)). The disordered stretch occupies residues 724 to 789 (ANWAPVPSPT…KERRPEGGYK (66 aa)). Over residues 729–762 (VPSPTHDPKPAEAPMPAEPAPPGPASPGGAPEPP) the composition is skewed to pro residues. S770 is subject to Phosphoserine. Position 810 is a phosphothreonine (T810). The segment at 811–845 (LDVDGASDSGSGDEGEGAGRGGGPYDAPGGDDSYI) is disordered. Phosphoserine is present on residues S817, S819, and S821. The segment covering 835-845 (YDAPGGDDSYI) has biased composition (low complexity).

In terms of assembly, part of the IMAC/intermicrovillar adhesion complex/intermicrovillar tip-link complex composed of ANKS4B, MYO7B, USH1C, CDHR2 and CDHR5. Interacts (via cytoplasmic domain) with USH1C and MYO7B; required for proper localization of CDHR5 to microvilli tips and its function in brush border differentiation. In terms of processing, N- and O-glycosylated. In terms of tissue distribution, highest expression in kidney, liver, colon and small intestine. In kidney, expressed apically along brush border of proximal convoluted tubule but not in cortical collecting ducts. Isoform 1 is expressed primarily in adult small intestine and colon. Isoform 2 is highly expressed in fetal liver. Expressed in duodenum with higher expression in enterocytes along the villus axis and lower expression in crypts (at protein level).

It is found in the apical cell membrane. The protein localises to the cell projection. Its subcellular location is the microvillus membrane. In terms of biological role, intermicrovillar adhesion molecule that forms, via its extracellular domain, calcium-dependent heterophilic complexes with CDHR2 on adjacent microvilli. Thereby, controls the packing of microvilli at the apical membrane of epithelial cells. Through its cytoplasmic domain, interacts with microvillus cytoplasmic proteins to form the intermicrovillar adhesion complex/IMAC. This complex plays a central role in microvilli and epithelial brush border differentiation. The protein is Cadherin-related family member 5 of Homo sapiens (Human).